The following is a 759-amino-acid chain: Multifunctional tryptophan biosynthesis protein (759 aa).

The Glutamine amidotransferase type-1 domain maps to 27-223; sequence PIVMIDNYDS…LNLTAGTWEE (197 aa). Position 80 to 82 (80 to 82) interacts with L-glutamine; sequence GPG. The active-site Nucleophile; for GATase activity is cysteine 108. Residues glutamine 112 and 158–159 each bind L-glutamine; that span reads SL. Residues histidine 197 and glutamate 199 each act as for GATase activity in the active site. The tract at residues 257–519 is indole-3-glycerol phosphate synthase; it reads ILEKIHAQRL…DPAAFARELL (263 aa). The tract at residues 536-759 is N-(5'-phosphoribosyl)anthranilate isomerase; the sequence is LVKVCGTRSL…KAFINAVKEL (224 aa).

The catalysed reaction is N-(5-phospho-beta-D-ribosyl)anthranilate = 1-(2-carboxyphenylamino)-1-deoxy-D-ribulose 5-phosphate. It catalyses the reaction 1-(2-carboxyphenylamino)-1-deoxy-D-ribulose 5-phosphate + H(+) = (1S,2R)-1-C-(indol-3-yl)glycerol 3-phosphate + CO2 + H2O. The enzyme catalyses chorismate + L-glutamine = anthranilate + pyruvate + L-glutamate + H(+). It participates in amino-acid biosynthesis; L-tryptophan biosynthesis; L-tryptophan from chorismate: step 1/5. Its pathway is amino-acid biosynthesis; L-tryptophan biosynthesis; L-tryptophan from chorismate: step 3/5. The protein operates within amino-acid biosynthesis; L-tryptophan biosynthesis; L-tryptophan from chorismate: step 4/5. Functionally, trifunctional enzyme bearing the Gln amidotransferase (GATase) domain of anthranilate synthase, indole-glycerolphosphate synthase, and phosphoribosylanthranilate isomerase activities. The chain is Multifunctional tryptophan biosynthesis protein (trp1) from Schizosaccharomyces pombe (strain 972 / ATCC 24843) (Fission yeast).